Here is a 182-residue protein sequence, read N- to C-terminus: Adenylate kinase (182 aa).

12–17 (GAGKGT) is an ATP binding site. The interval 32–61 (STGDLLRTEVGAKTPLGQEAAAVMNRGELV) is NMP. AMP is bound by residues Thr33, Arg38, 59–61 (ELV), 85–88 (GFPR), and Gln92. The tract at residues 126–132 (SRGRSDD) is LID. Arg127 contacts ATP. The AMP site is built by Arg129 and Arg140. Gly168 contributes to the ATP binding site.

The protein belongs to the adenylate kinase family. Monomer.

The protein localises to the cytoplasm. It carries out the reaction AMP + ATP = 2 ADP. It participates in purine metabolism; AMP biosynthesis via salvage pathway; AMP from ADP: step 1/1. Catalyzes the reversible transfer of the terminal phosphate group between ATP and AMP. Plays an important role in cellular energy homeostasis and in adenine nucleotide metabolism. The protein is Adenylate kinase of Prochlorococcus marinus (strain MIT 9313).